A 67-amino-acid polypeptide reads, in one-letter code: Protein AaeX (67 aa).

2 helical membrane passes run 3–23 (LFPVFVVFGLSFPPIFFELIL) and 43–63 (FVWHPALFNTALYCCLFYLIS).

Belongs to the AaeX family.

The protein resides in the cell membrane. This chain is Protein AaeX, found in Enterobacter sp. (strain 638).